The following is a 112-amino-acid chain: MTESEFLKQAEATLDQIEASLEDLADTSDLDVECTRSGNVLEIEFIDNGSKIIVNSQAPMQELWVAAKSGGFHFKATGTQWINTRDGAELFAALSEMVSKQGGIPVVLQDAN.

The protein belongs to the frataxin family.

Functionally, involved in iron-sulfur (Fe-S) cluster assembly. May act as a regulator of Fe-S biogenesis. The sequence is that of Iron-sulfur cluster assembly protein CyaY from Janthinobacterium sp. (strain Marseille) (Minibacterium massiliensis).